The sequence spans 49 residues: Small integral membrane protein 27 (49 aa).

The chain crosses the membrane as a helical span at residues 11–31 (WTYSLLLLAIVLLSWGFVIYA).

The protein localises to the membrane. The polypeptide is Small integral membrane protein 27 (Mus musculus (Mouse)).